The sequence spans 562 residues: Cytochrome c oxidase subunit 1 (562 aa).

Residues 21 to 41 (TLYFLVLGFLALIVGSLFGPF) traverse the membrane as a helical segment. H72 contacts Fe(II)-heme a. The next 8 membrane-spanning stretches (helical) occupy residues 74–94 (VLNAIVFTQLFAQAIMVYLPA), 105–125 (LMWLSWWMAFIGLVVAALPLL), 144–164 (AFYLGASVFVLSTWVSIYIVL), 187–207 (VVFWLMWFLASLGLVLEAVLF), 227–247 (LFWWTGHPIVYFWLLPAYAII), 267–287 (LAFLLFLLLSTPVGFHHQFAD), 300–320 (VLTLFVAVPSLMTAFTVAASL), and 345–365 (AFVAPVLGLLGFIPGGAGGIV). Cu cation-binding residues include H233, Y237, H282, and H283. Positions 233 to 237 (HPIVY) form a cross-link, 1'-histidyl-3'-tyrosine (His-Tyr). H384 serves as a coordination point for heme a3. 4 consecutive transmembrane segments (helical) span residues 385 to 405 (FHLQVASLVTLTAMGSLYWLL), 420 to 440 (LGLAVVWLWFLGMMIMAVGLH), 471 to 491 (VLAGIVLLVALLLFIYGLFSV), and 527 to 547 (IGFWFAVAAILVVLAYGPTLV). A Fe(II)-heme a-binding site is contributed by H386.

Belongs to the heme-copper respiratory oxidase family. The cofactor is heme. It depends on Cu cation as a cofactor.

It localises to the cell membrane. The catalysed reaction is 4 Fe(II)-[cytochrome c] + O2 + 8 H(+)(in) = 4 Fe(III)-[cytochrome c] + 2 H2O + 4 H(+)(out). It functions in the pathway energy metabolism; oxidative phosphorylation. The protein is Cytochrome c oxidase subunit 1 (cbaA) of Thermus thermophilus (strain ATCC 27634 / DSM 579 / HB8).